Consider the following 82-residue polypeptide: Small ribosomal subunit protein uS17c (82 aa).

This sequence belongs to the universal ribosomal protein uS17 family. As to quaternary structure, part of the 30S ribosomal subunit.

Its subcellular location is the plastid. The protein resides in the chloroplast. Its function is as follows. One of the primary rRNA binding proteins, it binds specifically to the 5'-end of 16S ribosomal RNA. In Cyanidioschyzon merolae (strain NIES-3377 / 10D) (Unicellular red alga), this protein is Small ribosomal subunit protein uS17c (rps17).